The sequence spans 709 residues: Protein IMPAIRED IN BABA-INDUCED STERILITY 1 (709 aa).

A lipid anchor (N-myristoyl glycine) is attached at Gly2. Residues 53 to 80 (SGKKSSSKKSGSELGSDFGELSESGRAS) are disordered. One can recognise a Protein kinase domain in the interval 131-418 (FEKLEKIGQG…ASTALVSQYF (288 aa)). ATP-binding positions include 137–145 (IGQGTYSSV) and Lys160. Asp255 functions as the Proton acceptor in the catalytic mechanism. 2 disordered regions span residues 434–536 (SPSK…PFSG) and 566–609 (SRGH…QDRE). Positions 437-449 (KEIDAKHREDTTR) are enriched in basic and acidic residues. Positions 484 to 494 (HSQKFQKRNGH) are enriched in basic residues. A compositionally biased stretch (polar residues) spans 495–505 (SVHNSIDSDST). Composition is skewed to basic and acidic residues over residues 509-523 (KMQK…EASH) and 586-609 (VDSK…QDRE).

The protein belongs to the protein kinase superfamily. Ser/Thr protein kinase family.

Its function is as follows. Required for beta-aminobutyric acid (BABA)-induced resistance (BABA-IR) against bacteria (e.g. P.syringae) and oomycetes (e.g. H.parasitica) via priming for salicylate (SA)-dependent defense responses such as pathogenesis-related PR-1 gene expression and trailing necrosis. Involved in BABA-mediated sterility. Necessary for the inheritance of BABA-priming to next generation, especially for the primed to be primed phenotype which consists in an enhanced second BABA-priming in transgenerationally primed plants. The chain is Protein IMPAIRED IN BABA-INDUCED STERILITY 1 from Arabidopsis thaliana (Mouse-ear cress).